Reading from the N-terminus, the 326-residue chain is B3 domain-containing protein At5g60130 (326 aa).

The segment at residues 12–110 (PKFFKVYLPD…CFHFCIYEHR (99 aa)) is a DNA-binding region (TF-B3). The tract at residues 124–222 (EEIKVESDSD…DEDERQYLDD (99 aa)) is disordered. Acidic residues predominate over residues 143–199 (LSLDEDDDDSDYNCGEDNDSDDYADEAAVEKDDNDADDEDVDNVADDVPVEDDDYVE).

It localises to the nucleus. This Arabidopsis thaliana (Mouse-ear cress) protein is B3 domain-containing protein At5g60130.